Consider the following 112-residue polypeptide: Putative pterin-4-alpha-carbinolamine dehydratase (112 aa).

The protein belongs to the pterin-4-alpha-carbinolamine dehydratase family.

It catalyses the reaction (4aS,6R)-4a-hydroxy-L-erythro-5,6,7,8-tetrahydrobiopterin = (6R)-L-erythro-6,7-dihydrobiopterin + H2O. The protein is Putative pterin-4-alpha-carbinolamine dehydratase of Shewanella amazonensis (strain ATCC BAA-1098 / SB2B).